A 300-amino-acid chain; its full sequence is MTKQKVCPVCGSTEFIYDPERGEIVCARCGYVIEENIIDMGPEWRAFDASQREKRSRTGAPESILLHDKGLSTDIGIDRSLTGLMREKMYRLRKWQSRLRVSDAAERNLAFALSELDRITAQLKLPKHVEEEAARLYREAVRKGLIRGRSIESVIAACVYAACRLLKVPRTLDEISDIARVEKKEIGRSYRFIARNLNLTPKKLFVKPTDYVNKFADELGLSEKVRRRAIEILEEAYRRGLTSGKSPAGLVAAALYIASLLEGEKRTQREVAEVARVTEVTVRNRYKELVEKLGIKVPIT.

The TFIIB-type zinc finger occupies 2-34 (TKQKVCPVCGSTEFIYDPERGEIVCARCGYVIE). Residues C7, C10, C26, and C29 each coordinate Zn(2+). Tandem repeats lie at residues 114-197 (SELD…ARNL) and 210-291 (DYVN…ELVE).

Belongs to the TFIIB family.

Stabilizes TBP binding to an archaeal box-A promoter. Also responsible for recruiting RNA polymerase II to the pre-initiation complex (DNA-TBP-TFIIB). The polypeptide is Transcription initiation factor IIB (Pyrococcus horikoshii (strain ATCC 700860 / DSM 12428 / JCM 9974 / NBRC 100139 / OT-3)).